The following is a 307-amino-acid chain: Coproporphyrin III ferrochelatase (307 aa).

Residues Tyr12, Arg29, 45–46, Ser53, and Tyr124 each bind Fe-coproporphyrin III; that span reads RY. His181 and Glu263 together coordinate Fe(2+).

The protein belongs to the ferrochelatase family.

It is found in the cytoplasm. It carries out the reaction Fe-coproporphyrin III + 2 H(+) = coproporphyrin III + Fe(2+). It participates in porphyrin-containing compound metabolism; protoheme biosynthesis. In terms of biological role, involved in coproporphyrin-dependent heme b biosynthesis. Catalyzes the insertion of ferrous iron into coproporphyrin III to form Fe-coproporphyrin III. The chain is Coproporphyrin III ferrochelatase from Staphylococcus epidermidis (strain ATCC 35984 / DSM 28319 / BCRC 17069 / CCUG 31568 / BM 3577 / RP62A).